Reading from the N-terminus, the 193-residue chain is Orotate phosphoribosyltransferase (193 aa).

Residues Arg107, Lys108, Lys111, His113, and 133-141 each bind 5-phospho-alpha-D-ribose 1-diphosphate; that span reads EDVITSGGS. Residues Thr137 and Arg165 each coordinate orotate.

This sequence belongs to the purine/pyrimidine phosphoribosyltransferase family. PyrE subfamily. As to quaternary structure, homodimer. Requires Mg(2+) as cofactor.

The catalysed reaction is orotidine 5'-phosphate + diphosphate = orotate + 5-phospho-alpha-D-ribose 1-diphosphate. The protein operates within pyrimidine metabolism; UMP biosynthesis via de novo pathway; UMP from orotate: step 1/2. Catalyzes the transfer of a ribosyl phosphate group from 5-phosphoribose 1-diphosphate to orotate, leading to the formation of orotidine monophosphate (OMP). The protein is Orotate phosphoribosyltransferase of Rhodopirellula baltica (strain DSM 10527 / NCIMB 13988 / SH1).